Consider the following 1232-residue polypeptide: DNA topoisomerase 2 (1232 aa).

Residues Asn-65, Asn-94, 122 to 124 (SSN), 135 to 142 (GRHGYGAK), and 352 to 354 (QNK) contribute to the ATP site. The Toprim domain maps to 432–546 (RTLIVTEGDS…SLLNRNPGFI (115 aa)). Positions 438, 515, and 517 each coordinate Mg(2+). In terms of domain architecture, Topo IIA-type catalytic spans 681–1097 (LAHAVDGLKP…APVQMWLDEL (417 aa)). The active-site O-(5'-phospho-DNA)-tyrosine intermediate is the Tyr-771. The tract at residues 952-961 (SLTQRIYING) is interaction with DNA. The interval 1161 to 1184 (YVPPPPSKRPHVGQSVGGGGGGGS) is disordered. Over residues 1175 to 1184 (SVGGGGGGGS) the composition is skewed to gly residues.

This sequence belongs to the type II topoisomerase family. In terms of assembly, homodimer. Mg(2+) serves as cofactor. Mn(2+) is required as a cofactor. It depends on Ca(2+) as a cofactor.

It localises to the nucleus. The catalysed reaction is ATP-dependent breakage, passage and rejoining of double-stranded DNA.. Functionally, control of topological states of DNA by transient breakage and subsequent rejoining of DNA strands. Topoisomerase II makes double-strand breaks. This Trypanosoma cruzi protein is DNA topoisomerase 2 (TOP2).